The following is a 248-amino-acid chain: Large ribosomal subunit protein uL1 (248 aa).

This sequence belongs to the universal ribosomal protein uL1 family. As to quaternary structure, part of the 50S ribosomal subunit.

Its function is as follows. Binds directly to 23S rRNA. The L1 stalk is quite mobile in the ribosome, and is involved in E site tRNA release. In terms of biological role, protein L1 is also a translational repressor protein, it controls the translation of the L11 operon by binding to its mRNA. This chain is Large ribosomal subunit protein uL1, found in Orientia tsutsugamushi (strain Boryong) (Rickettsia tsutsugamushi).